Here is a 250-residue protein sequence, read N- to C-terminus: MALVSYSSSEEDEGETSEPPGRRLPPLPPPTTVLRMFQDMEGDEDLDENTKHEGRIRSFKHERGNWATYVYIPFQPQEEFLDLLDELVSVAAENGVLLTKMSEFHISQSQTVVLRHHWINPFVESLKDKLHCMYRFLCIAERIKVYTNQEKTRTFLGLEVSVGMEHLLEVVSEVDRSLQEFNLQTFYQEPSFHVSLAWCVGDKYEKLKGSCLLELQKVIDRFEDSDTLTRFNAEEIRCKAGNKTFCIPLL.

The disordered stretch occupies residues M1–T31. Pro residues predominate over residues R22–T31. The active-site Proton acceptor is H105. H105 to S107 contributes to the AMP binding site. UMP-binding positions include Q149, Y187, and S191–S195. Residues Y187 and E189 to S195 contribute to the AMP site. The active-site Proton donor is the H193.

The protein belongs to the 2H phosphoesterase superfamily. USB1 family.

Its subcellular location is the nucleus. The enzyme catalyses a 3'-end uridylyl-uridine-RNA = a 3'-end 2',3'-cyclophospho-uridine-RNA + uridine. It carries out the reaction a 3'-end uridylyl-adenosine-RNA = a 3'-end 2',3'-cyclophospho-uridine-RNA + adenosine. In terms of biological role, 3'-5' RNA exonuclease that trims the 3' end of oligo(U) and oligo(A) tracts of the pre-U6 small nuclear RNA (snRNA) molecule, leading to the formation of a mature U6 snRNA 3' end-terminated with a 2',3'-cyclic phosphate. Participates in the U6 snRNA 3' end processing that prevents U6 snRNA degradation. In addition also removes uridines from the 3' end of U6atac snRNA and possibly the vault RNA VTRNA1-1. This Xenopus laevis (African clawed frog) protein is U6 snRNA phosphodiesterase 1.